We begin with the raw amino-acid sequence, 185 residues long: MVNPFIKEAKEKMKRTLEKIEDELRKMRTGKPSPAILEEIKVDYYGVPTPVNQLATISISEERTLVIKPWDKSVLSLIEKAINASDLGLNPINDGNVIRLVFPSPTTEQREKWVKKAKEIVEEGKIAIRNIRREILKKIKEDQKEGLIPEDDAKRLENEIQKLTDEFIEKLDEVFEIKKEEIMEF.

It belongs to the RRF family.

Its subcellular location is the cytoplasm. Responsible for the release of ribosomes from messenger RNA at the termination of protein biosynthesis. May increase the efficiency of translation by recycling ribosomes from one round of translation to another. The chain is Ribosome-recycling factor from Thermotoga sp. (strain RQ2).